Reading from the N-terminus, the 92-residue chain is Small ribosomal subunit protein uS19 (92 aa).

It belongs to the universal ribosomal protein uS19 family.

Its function is as follows. Protein S19 forms a complex with S13 that binds strongly to the 16S ribosomal RNA. This Halalkalibacterium halodurans (strain ATCC BAA-125 / DSM 18197 / FERM 7344 / JCM 9153 / C-125) (Bacillus halodurans) protein is Small ribosomal subunit protein uS19 (rpsS).